The chain runs to 155 residues: Endoribonuclease YbeY (155 aa).

Positions 114, 118, and 124 each coordinate Zn(2+).

This sequence belongs to the endoribonuclease YbeY family. It depends on Zn(2+) as a cofactor.

Its subcellular location is the cytoplasm. Single strand-specific metallo-endoribonuclease involved in late-stage 70S ribosome quality control and in maturation of the 3' terminus of the 16S rRNA. This chain is Endoribonuclease YbeY, found in Enterobacter sp. (strain 638).